The primary structure comprises 870 residues: Dynamin-2 (870 aa).

One can recognise a Dynamin-type G domain in the interval 28-294 (HLDLPQIAVV…LTNHIRESLP (267 aa)). Positions 38 to 45 (GGQSAGKS) are G1 motif. GDP contacts are provided by Ser41, Gly43, Lys44, Ser45, Ser46, Arg59, and Gly60. The G2 motif stretch occupies residues 64–66 (VTR). The segment at 136–139 (DLPG) is G3 motif. A G4 motif region spans residues 205 to 208 (TKLD). GDP contacts are provided by Lys206, Asp208, and Asp211. Position 231 is a phosphotyrosine (Tyr231). The interval 235 to 238 (VNRS) is G5 motif. GDP contacts are provided by Asn236, Arg237, and Gln239. Lys299 bears the N6-acetyllysine mark. Residues 519–625 (LVIRRGWLTI…WKASFLRAGV (107 aa)) form the PH domain. Tyr597 bears the Phosphotyrosine mark. Lys598 is modified (N6-acetyllysine). Residues 653 to 744 (VETIRNLVDS…IIGDISTSTV (92 aa)) form the GED domain. The segment at 741 to 870 (TSTVSTPVPP…IRPAEPSLLD (130 aa)) is disordered. Thr755 is subject to Phosphothreonine. The segment covering 756-767 (WLQNTSSHSPTP) has biased composition (polar residues). At Ser764 the chain carries Phosphoserine; by CDK1. Residues 826–846 (SAPPQIPSRPARIPPGIPPGV) are compositionally biased toward pro residues. A compositionally biased stretch (low complexity) spans 847-864 (PSRRAPAAPSRPTIIRPA).

This sequence belongs to the TRAFAC class dynamin-like GTPase superfamily. Dynamin/Fzo/YdjA family. As to quaternary structure, oligomerizes into a helical polymer that self-assembles around the vesicle membrane, when associated to the menbrane through lipid binding. Interacts with SHANK1 and SHANK2. Interacts with SNX9. Interacts (via C-terminal proline-rich domain (PRD)) with SNX18 (via SH3 domain); this interaction regulates ATG9A and ATG16L1 trafficking from recycling endosomes to sites of autophagosome formation. Interacts with SNX33 (via SH3 domain). Interacts with PSTPIP1 (via SH3 domain). Interacts with CTNND2. Interacts (via C-terminal proline-rich domain (PRD)) with BIN1 (via SH3 domain); this interaction allows the recruitment of DNM2 to the membrane tubules and inhibits self-assembly-stimulated GTPase activity on the membrane. Interacts with GABARAP, GABARAPL1 and GABARAPL2. Interacts with MAP1LC3B (the lipidate and non-lipidated LC3 form); this interaction mediates recycling endosome scission leading to autophagosome release. Interacts with ITSN1. Interacts with MYOF. May interact with PIK3C3. May be a component of a complex composed of RAB5A (in GDP-bound form), DYN2 and PIK3C3. Interacts with SDC4; this interaction is markedly enhanced at focal ahesion site upon induction of focal adhesions and stress-fiber formation. Interacts with ACTN1. Interacts with CTTN; this interaction stimulates the intrinsic GTPase activity of DNM2 and stabilizes the association of DNM2 and actin filaments; in addition this interaction is stimulated by ligand binding to the receptor, leading to the recruitment of the DNM2-CTTN complex to the sequestered receptor-ligand complex to its internalization. Interacts with NOSTRIN (via SH3 domain); this interaction allows the recruitment of NOS3 to dynamin-positive structures. Interacts (via C-terminal proline-rich domain (PRD)) with SH3BP4 (via SH3 domain); this interaction controls the GTPase activity and is prevented by EGFR-induced tyrosine phosphorylation of either DNM2 or SH3BP4. Interacts with MYO1E (via SH3 domain). Interacts with TUBG1; this interaction may participate in centrosome cohesion. Post-translationally, phosphorylation at Ser-848 by GSK3-alpha relieves the inhibition of BIN1 and promotes endocytosis. Phosphorylation at Ser-764 by CDK1 is greatly increased upon mitotic entry. It regulates cytokinesis downstream of calcineurin, and does not affect clathrin-mediated endocytosis. Dephosphorylated by calcineurin/PP2 during cytokinesis in a Ca(2+)- and calmodulin-dependent manner. Phosphorylated on tyrosine residues by EGFR. Phosphorylated on tyrosine residues after activation of SRC. Ubiquitously expressed. Brain expression is restricted to glial cells and fibroblasts. Highest levels in the testis.

The protein resides in the cytoplasm. It localises to the cytoskeleton. The protein localises to the cytoplasmic vesicle. It is found in the clathrin-coated vesicle. Its subcellular location is the cell projection. The protein resides in the uropodium. It localises to the endosome. The protein localises to the microtubule organizing center. It is found in the centrosome. Its subcellular location is the centriole. The protein resides in the recycling endosome. It localises to the phagocytic cup. The protein localises to the phagosome membrane. It is found in the podosome. Its subcellular location is the cell junction. The protein resides in the postsynaptic density. It localises to the synapse. The protein localises to the synaptosome. It is found in the midbody. Its subcellular location is the membrane. The protein resides in the clathrin-coated pit. It localises to the cell membrane. The catalysed reaction is GTP + H2O = GDP + phosphate + H(+). In terms of biological role, catalyzes the hydrolysis of GTP and utilizes this energy to mediate vesicle scission at plasma membrane during endocytosis and filament remodeling at many actin structures during organization of the actin cytoskeleton. Plays an important role in vesicular trafficking processes, namely clathrin-mediated endocytosis (CME), exocytic and clathrin-coated vesicle from the trans-Golgi network, and PDGF stimulated macropinocytosis. During vesicular trafficking process, associates to the membrane, through lipid binding, and self-assembles into ring-like structure through oligomerization to form a helical polymer around the vesicle membrane and leading to vesicle scission. Plays a role in organization of the actin cytoskeleton by mediating arrangement of stress fibers and actin bundles in podocytes. During organization of the actin cytoskeleton, self-assembles into ring-like structure that directly bundles actin filaments to form typical membrane tubules decorated with dynamin spiral polymers. Self-assembly increases GTPase activity and the GTP hydrolysis causes the rapid depolymerization of dynamin spiral polymers, and results in dispersion of actin bundles. Remodels, through its interaction with CTTN, bundled actin filaments in a GTPase-dependent manner and plays a role in orchestrating the global actomyosin cytoskeleton. The interaction with CTTN stabilizes the interaction of DNM2 and actin filaments and stimulates the intrinsic GTPase activity that results in actin filament-barbed ends and increases the sensitivity of filaments in bundles to the actin depolymerizing factor, CFL1. Plays a role in the autophagy process, by participating in the formation of ATG9A vesicles destined for the autophagosomes through its interaction with SNX18, by mediating recycling endosome scission leading to autophagosome release through MAP1LC3B interaction and by regulating maturation of apoptotic cell corpse-containing phagosomes by recruiting PIK3C3 to the phagosome membrane. Also plays a role in cytokinesis. May participate in centrosome cohesion through its interaction with TUBG1. Plays a role in the regulation of neuron morphology, axon growth and formation of neuronal growth cones. Involved in membrane tubulation. The sequence is that of Dynamin-2 from Rattus norvegicus (Rat).